Reading from the N-terminus, the 162-residue chain is UPF0114 protein Psyr_4257 (162 aa).

The next 4 helical transmembrane spans lie at 15 to 35 (LLAPIYFGLSLGLLALCLKFF), 53 to 73 (LILVLLSLIDMALVGGLLVMV), 109 to 129 (VAASIVAISSIHLLRVFMDAT), and 136 to 156 (LMWYVIIHMTFVISAFAMGYL).

The protein belongs to the UPF0114 family.

The protein resides in the cell membrane. This Pseudomonas syringae pv. syringae (strain B728a) protein is UPF0114 protein Psyr_4257.